The following is a 260-amino-acid chain: Late transcription factor 1 (260 aa).

It belongs to the chordopoxvirinae VLTF-1 family. Interacts with the late transcription factors VLTF-2 and VLTF-3. Interacts with the late transcription elongation factor H5/VLTF-4. Interacts with itself.

In terms of biological role, associates with RNA polymerase to initiate transcription from late gene promoters. The chain is Late transcription factor 1 (VLTF1) from Vertebrata (FPV).